Reading from the N-terminus, the 492-residue chain is Serine carboxypeptidase-like 31 (492 aa).

The signal sequence occupies residues 1-30; it reads MDNYQTKNISNLLTSLCFTTLLILAPVVIC. 3 cysteine pairs are disulfide-bonded: C105/C376, C270/C283, and C307/C344. Residue N156 is glycosylated (N-linked (GlcNAc...) asparagine). S198 is an active-site residue. N221 and N271 each carry an N-linked (GlcNAc...) asparagine glycan. N-linked (GlcNAc...) asparagine glycosylation is found at N372 and N383. Active-site residues include D413 and H465.

It belongs to the peptidase S10 family. As to expression, expressed in roots, senescent leaves, stems, flowers and siliques.

The protein localises to the secreted. Functionally, probable carboxypeptidase. The sequence is that of Serine carboxypeptidase-like 31 (SCPL31) from Arabidopsis thaliana (Mouse-ear cress).